Consider the following 862-residue polypeptide: MNSAEQTVTWLITLGVLESPKKTISDPEVFLQASLKDGVVLCRLLERLLPGTIEKVYPEPRNESECLSNIREFLRACGASLRLETFDANDLYQGQNFNKVLSSLVTLNKVTADIGLGSDSVCARPSSHRIKSFDSLGSQSSHSRTSKLLQSQYRSLDMTDNTNSQLVVRAKFNFQQTNEDELSFSKGDVIHVTRVEEGGWWEGTHNGRTGWFPSNYVREIKPSEKPVSPKSGTLKSPPKGFDTTAINKSYYNVVLQNILETEHEYSKELQSVLSTYLRPLQTSDKLSSANTSYLMGNLEEISSFQQVLVQSLEECTKSPEAQQRVGGCFLSLMPQMRTLYLAYCANHPSAVSVLTEHSEDLGEFMETKGASSPGILVLTTGLSKPFMRLDKYPTLLKELERHMEDYHPDRQDIQKSMTAFKNLSAQCQEVRKRKELELQILTEPIRSWEGDDIKTLGSVTYMSQVTIQCAGSEEKNERYLLLFPNLLLMLSASPRMSGFIYQGKLPTTGMTITKLEDSENHRNAFEISGSMIERILVSCTSQQDLHEWVEHLQKQTKVTSVSNPTIKPHSVPSHTLPSHPLTPSSKHADSKPVALTPAYHTLPHPSHHGTPHTTISWGPLEPPKTPKPWSLSCLRPAPPLRPSAALCYKEDLSKSPKTMKKLLPKRKPERKPSDEEFAVRKSTAALEEDAQILKVIEAYCTSAKTRQTLNSTWQGTDLMHNHVLADDDQSSLDSLGRRSSLSRLEPSDLSEDSEYDSIWTAHSYRMGSASRSRKESAPQVLLPEEEKIIVEETKSNGQTVIEEKSLVDTVYALKDEVQELRQDNKKMKKSLEEEQRARKDLEKLVRKVLKNMNDPAWDETNL.

Residues 1–112 (MNSAEQTVTW…SLVTLNKVTA (112 aa)) form the Calponin-homology (CH) domain. 5 positions are modified to phosphoserine: Ser132, Ser155, Ser164, Ser228, and Ser236. The SH3 domain maps to 163-222 (NSQLVVRAKFNFQQTNEDELSFSKGDVIHVTRVEEGGWWEGTHNGRTGWFPSNYVREIKP). Residues 250–430 (YYNVVLQNIL…KNLSAQCQEV (181 aa)) form the DH domain. The PH domain occupies 452-557 (DIKTLGSVTY…WVEHLQKQTK (106 aa)). Ser497 carries the post-translational modification Phosphoserine. Disordered regions lie at residues 559-591 (TSVS…ADSK), 657-679 (KTMK…EFAV), and 728-748 (DQSS…EPSD). Polar residues predominate over residues 572–585 (PSHTLPSHPLTPSS). Over residues 657–669 (KTMKKLLPKRKPE) the composition is skewed to basic residues. Basic and acidic residues predominate over residues 670 to 679 (RKPSDEEFAV). Residue Ser673 is modified to Phosphoserine. Residues 731-744 (SLDSLGRRSSLSRL) show a composition bias toward low complexity. Ser776 carries the post-translational modification Phosphoserine. Residues 804-854 (KSLVDTVYALKDEVQELRQDNKKMKKSLEEEQRARKDLEKLVRKVLKNMND) are a coiled coil.

In terms of assembly, interacts with PAK kinases through the SH3 domain. Interacts with unphosphorylated PAK1. Interacts with ITCH. Interacts with SCRIB; interaction is direct and may play a role in regulation of apoptosis. Interacts with GIT1 and TGFB1I1. Interacts with FRMPD4 (via N-terminus). Interacts with CaMK1. Interacts with BIN2. Interacts with PTK2/FAK1 and RAC1. Interacts with PARVB. Interacts with YWHAZ. Interacts (via PH domain) with NOX1 (via FAD-binding FR-type domain). Post-translationally, phosphorylated on Ser-673 by CaMK1; enhancement of GEF activity and downstream activation of RAC1. Phosphorylated by PTK2/FAK1; this promotes interaction with RAC1. As to expression, seems to be expressed in the central nervous system. Isoform B, isoform C and isoform E are expressed with highest levels in brain and testis.

It localises to the cell junction. Its subcellular location is the focal adhesion. The protein localises to the cell projection. The protein resides in the ruffle. It is found in the cytoplasm. It localises to the cell cortex. Its subcellular location is the lamellipodium. Acts as a RAC1 guanine nucleotide exchange factor (GEF) and can induce membrane ruffling. May function as a positive regulator of apoptosis. Functions in cell migration, attachment and cell spreading. Promotes targeting of RAC1 to focal adhesions. Downstream of NMDA receptors and CaMKK-CaMK1 signaling cascade, promotes the formation of spines and synapses in hippocampal neurons. The protein is Rho guanine nucleotide exchange factor 7 (Arhgef7) of Mus musculus (Mouse).